The sequence spans 312 residues: Methionyl-tRNA formyltransferase (312 aa).

109–112 is a binding site for (6S)-5,6,7,8-tetrahydrofolate; that stretch reads SLLP.

It belongs to the Fmt family.

It carries out the reaction L-methionyl-tRNA(fMet) + (6R)-10-formyltetrahydrofolate = N-formyl-L-methionyl-tRNA(fMet) + (6S)-5,6,7,8-tetrahydrofolate + H(+). Attaches a formyl group to the free amino group of methionyl-tRNA(fMet). The formyl group appears to play a dual role in the initiator identity of N-formylmethionyl-tRNA by promoting its recognition by IF2 and preventing the misappropriation of this tRNA by the elongation apparatus. This is Methionyl-tRNA formyltransferase from Anaeromyxobacter dehalogenans (strain 2CP-1 / ATCC BAA-258).